Here is a 229-residue protein sequence, read N- to C-terminus: Phosphoglycolate phosphatase (229 aa).

Asp18 functions as the Nucleophile in the catalytic mechanism. Mg(2+) is bound by residues Asp18, Asp20, and Asp176.

It belongs to the HAD-like hydrolase superfamily. CbbY/CbbZ/Gph/YieH family. Mg(2+) serves as cofactor.

It carries out the reaction 2-phosphoglycolate + H2O = glycolate + phosphate. It functions in the pathway organic acid metabolism; glycolate biosynthesis; glycolate from 2-phosphoglycolate: step 1/1. Functionally, specifically catalyzes the dephosphorylation of 2-phosphoglycolate. Is involved in the dissimilation of the intracellular 2-phosphoglycolate formed during the DNA repair of 3'-phosphoglycolate ends, a major class of DNA lesions induced by oxidative stress. The sequence is that of Phosphoglycolate phosphatase from Xylella fastidiosa (strain Temecula1 / ATCC 700964).